The primary structure comprises 444 residues: Trigger factor (444 aa).

The PPIase FKBP-type domain occupies 161–246; the sequence is GDRVVIDFKG…VQKVEGQKLP (86 aa).

The protein belongs to the FKBP-type PPIase family. Tig subfamily.

The protein localises to the cytoplasm. It carries out the reaction [protein]-peptidylproline (omega=180) = [protein]-peptidylproline (omega=0). In terms of biological role, involved in protein export. Acts as a chaperone by maintaining the newly synthesized protein in an open conformation. Functions as a peptidyl-prolyl cis-trans isomerase. In Saccharophagus degradans (strain 2-40 / ATCC 43961 / DSM 17024), this protein is Trigger factor.